Here is a 210-residue protein sequence, read N- to C-terminus: Viral protein 1 (210 aa).

The polypeptide is Viral protein 1 (Chaetoceros (Chaetoceros sp. DNA virus 7)).